An 82-amino-acid polypeptide reads, in one-letter code: Conotoxin C11GB (82 aa).

The signal sequence occupies residues 1-22 (MKLTCVMIVAVLFLTAWTVVTA). A propeptide spanning residues 23–53 (EPHSSNVLENLYLKAHHEMENPEASKLNTRD) is cleaved from the precursor. 3 disulfide bridges follow: Cys-55-Cys-72, Cys-62-Cys-76, and Cys-71-Cys-80.

Belongs to the conotoxin O1 superfamily. As to expression, expressed by the venom duct.

The protein resides in the secreted. The protein is Conotoxin C11GB of Conus vexillum (Flag cone).